A 438-amino-acid polypeptide reads, in one-letter code: Ornithine aminotransferase car2 (438 aa).

At lysine 275 the chain carries N6-(pyridoxal phosphate)lysine.

The protein belongs to the class-III pyridoxal-phosphate-dependent aminotransferase family. It depends on pyridoxal 5'-phosphate as a cofactor.

It is found in the cytoplasm. The protein localises to the nucleus. It carries out the reaction a 2-oxocarboxylate + L-ornithine = L-glutamate 5-semialdehyde + an L-alpha-amino acid. It functions in the pathway amino-acid biosynthesis; L-proline biosynthesis; L-glutamate 5-semialdehyde from L-ornithine: step 1/1. In Schizosaccharomyces pombe (strain 972 / ATCC 24843) (Fission yeast), this protein is Ornithine aminotransferase car2 (car2).